We begin with the raw amino-acid sequence, 29 residues long: Cytochrome b6-f complex subunit 8 (29 aa).

The helical transmembrane segment at 3–23 (IVDIAWAALMVVFTFSLSLVV) threads the bilayer.

It belongs to the PetN family. In terms of assembly, the 4 large subunits of the cytochrome b6-f complex are cytochrome b6, subunit IV (17 kDa polypeptide, PetD), cytochrome f and the Rieske protein, while the 4 small subunits are PetG, PetL, PetM and PetN. The complex functions as a dimer.

The protein localises to the plastid. Its subcellular location is the chloroplast thylakoid membrane. Component of the cytochrome b6-f complex, which mediates electron transfer between photosystem II (PSII) and photosystem I (PSI), cyclic electron flow around PSI, and state transitions. This Gnetum parvifolium (Small-leaved jointfir) protein is Cytochrome b6-f complex subunit 8.